Here is a 455-residue protein sequence, read N- to C-terminus: Indoleacetamide hydrolase (455 aa).

Residues Lys71 and Ser146 each act as charge relay system in the active site. Ser170 functions as the Acyl-ester intermediate in the catalytic mechanism.

It belongs to the amidase family.

It participates in plant hormone metabolism; auxin biosynthesis. Its function is as follows. Hydrolyzes indole-3-acetamide (IAM) into indole-3-acetic acid (IAA). The polypeptide is Indoleacetamide hydrolase (iaaH) (Pseudomonas savastanoi (Pseudomonas syringae pv. savastanoi)).